We begin with the raw amino-acid sequence, 101 residues long: NAD(P)H-quinone oxidoreductase subunit 4L, chloroplastic (101 aa).

The next 3 membrane-spanning stretches (helical) occupy residues 2-22, 32-52, and 61-81; these read MLEY…YGLI, MCLE…SDFF, and IFSI…PAIV.

The protein belongs to the complex I subunit 4L family. As to quaternary structure, NDH is composed of at least 16 different subunits, 5 of which are encoded in the nucleus.

The protein localises to the plastid. It localises to the chloroplast thylakoid membrane. It catalyses the reaction a plastoquinone + NADH + (n+1) H(+)(in) = a plastoquinol + NAD(+) + n H(+)(out). The catalysed reaction is a plastoquinone + NADPH + (n+1) H(+)(in) = a plastoquinol + NADP(+) + n H(+)(out). In terms of biological role, NDH shuttles electrons from NAD(P)H:plastoquinone, via FMN and iron-sulfur (Fe-S) centers, to quinones in the photosynthetic chain and possibly in a chloroplast respiratory chain. The immediate electron acceptor for the enzyme in this species is believed to be plastoquinone. Couples the redox reaction to proton translocation, and thus conserves the redox energy in a proton gradient. The sequence is that of NAD(P)H-quinone oxidoreductase subunit 4L, chloroplastic from Populus trichocarpa (Western balsam poplar).